Reading from the N-terminus, the 529-residue chain is Putative amidohydrolase YtcJ (529 aa).

Belongs to the metallo-dependent hydrolases superfamily.

In Bacillus subtilis (strain 168), this protein is Putative amidohydrolase YtcJ (ytcJ).